A 261-amino-acid polypeptide reads, in one-letter code: Pantothenate synthetase (261 aa).

29 to 36 (MGALHNGH) is a binding site for ATP. The active-site Proton donor is His36. Position 60 (Gln60) interacts with (R)-pantoate. Gln60 contacts beta-alanine. 147–150 (GEKD) is an ATP binding site. (R)-pantoate is bound at residue Gln153. 184 to 187 (LSSR) contacts ATP.

This sequence belongs to the pantothenate synthetase family. As to quaternary structure, homodimer.

It localises to the cytoplasm. It carries out the reaction (R)-pantoate + beta-alanine + ATP = (R)-pantothenate + AMP + diphosphate + H(+). It participates in cofactor biosynthesis; (R)-pantothenate biosynthesis; (R)-pantothenate from (R)-pantoate and beta-alanine: step 1/1. In terms of biological role, catalyzes the condensation of pantoate with beta-alanine in an ATP-dependent reaction via a pantoyl-adenylate intermediate. In Francisella philomiragia subsp. philomiragia (strain ATCC 25017 / CCUG 19701 / FSC 153 / O#319-036), this protein is Pantothenate synthetase.